The primary structure comprises 190 residues: uncharacterized protein (190 aa).

The helical transmembrane segment at 12–34 (LLGLSIFLTTFLFVANFLPGIFA) threads the bilayer.

Its subcellular location is the membrane. This is an uncharacterized protein from Archaeoglobus fulgidus (strain ATCC 49558 / DSM 4304 / JCM 9628 / NBRC 100126 / VC-16).